Consider the following 383-residue polypeptide: S-adenosylmethionine synthase (383 aa).

H15 is an ATP binding site. D17 is a binding site for Mg(2+). E43 serves as a coordination point for K(+). L-methionine is bound by residues E56 and Q99. A flexible loop region spans residues 99–109 (QSPDINQGVDR). ATP-binding positions include 164–166 (DAK), 230–231 (RF), D239, 245–246 (RK), A262, and K266. L-methionine is bound at residue D239. K270 serves as a coordination point for L-methionine.

It belongs to the AdoMet synthase family. In terms of assembly, homotetramer; dimer of dimers. Requires Mg(2+) as cofactor. K(+) is required as a cofactor.

It localises to the cytoplasm. The catalysed reaction is L-methionine + ATP + H2O = S-adenosyl-L-methionine + phosphate + diphosphate. It functions in the pathway amino-acid biosynthesis; S-adenosyl-L-methionine biosynthesis; S-adenosyl-L-methionine from L-methionine: step 1/1. In terms of biological role, catalyzes the formation of S-adenosylmethionine (AdoMet) from methionine and ATP. The overall synthetic reaction is composed of two sequential steps, AdoMet formation and the subsequent tripolyphosphate hydrolysis which occurs prior to release of AdoMet from the enzyme. The protein is S-adenosylmethionine synthase of Pectobacterium atrosepticum (strain SCRI 1043 / ATCC BAA-672) (Erwinia carotovora subsp. atroseptica).